We begin with the raw amino-acid sequence, 400 residues long: Putative cytochrome P450 141 (400 aa).

Transmembrane regions (helical) follow at residues 225 to 245 (VVGM…AVIT) and 294 to 314 (VVIA…ITSA). Cys346 contacts heme.

It belongs to the cytochrome P450 family. Heme is required as a cofactor.

It is found in the cell membrane. The polypeptide is Putative cytochrome P450 141 (cyp141) (Mycobacterium tuberculosis (strain CDC 1551 / Oshkosh)).